The chain runs to 610 residues: UvrABC system protein C (610 aa).

Positions 16-94 (HQPGVYRMYN…IKQYLPKYNV (79 aa)) constitute a GIY-YIG domain. One can recognise a UVR domain in the interval 204–239 (NQVLELLVQKMEIASQQLKFEDAAKFRDQIQAIRRV).

Belongs to the UvrC family. As to quaternary structure, interacts with UvrB in an incision complex.

It is found in the cytoplasm. In terms of biological role, the UvrABC repair system catalyzes the recognition and processing of DNA lesions. UvrC both incises the 5' and 3' sides of the lesion. The N-terminal half is responsible for the 3' incision and the C-terminal half is responsible for the 5' incision. In Vibrio vulnificus (strain CMCP6), this protein is UvrABC system protein C.